Consider the following 281-residue polypeptide: uncharacterized protein (281 aa).

A helical membrane pass occupies residues 5-27; that stretch reads AYVTVIYGNNIYLTGALVLGYTL.

It localises to the membrane. This is an uncharacterized protein from Acanthamoeba polyphaga mimivirus (APMV).